The primary structure comprises 80 residues: MLAPRVSQALIRSFSSTARNRLKNRVPEKQKLFQEDNGIPVYLKGGVVDHILYRVTMGLCLGGTAYGVYCLAWASFPRNK.

The transit peptide at 1-21 (MLAPRVSQALIRSFSSTARNR) directs the protein to the mitochondrion. Residues 22 to 46 (LKNRVPEKQKLFQEDNGIPVYLKGG) are Mitochondrial matrix-facing. A helical membrane pass occupies residues 47–75 (VVDHILYRVTMGLCLGGTAYGVYCLAWAS). Residues 76–80 (FPRNK) are Mitochondrial intermembrane-facing.

Belongs to the cytochrome c oxidase VIIa family. As to quaternary structure, component of the complex IV (CIV, cytochrome c oxidase), a multisubunit enzyme composed of 14 subunits. The complex is composed of a catalytic core of 3 subunits MT-CO1, MT-CO2 and MT-CO3, encoded in the mitochondrial DNA, and 11 supernumerary subunits COX4I1 (or COX4I2), COX5A, COX5B, COX6A2 (or COX6A1), COX6B1 (or COX6B2), COX6C, COX7A1 (or COX7A2), COX7B, COX7C, COX8B and NDUFA4, which are encoded in the nuclear genome. The complex exists as a monomer or a dimer and forms supercomplexes (SCs) in the inner mitochondrial membrane with NADH-ubiquinone oxidoreductase (complex I, CI) and ubiquinol-cytochrome c oxidoreductase (cytochrome b-c1 complex, complex III, CIII), resulting in different assemblies (supercomplex SCI(1)III(2)IV(1) and megacomplex MCI(2)III(2)IV(2)).

The protein localises to the mitochondrion inner membrane. The protein operates within energy metabolism; oxidative phosphorylation. Its function is as follows. Component of the mitochondrial respiratory complex IV (CIV, also named cytochrome c oxidase complex), the last enzyme in the mitochondrial electron transport chain which drives oxidative phosphorylation. The CIV complex is the component of the respiratory chain that catalyzes the reduction of oxygen to water. Acts as an assembly factor that specifically drives the homodimerization of CIV complexes, mediating the formation of mitochondrial respiratory supercomplexes (respirasomes) containing two CIV: supercomplxes with two molecules of CIV show improved activity. Despite being highly expressed in brown adipose tissue, not required for thermogenesis. The chain is Cytochrome c oxidase subunit 7A1, mitochondrial (COX7A1) from Saimiri sciureus (Common squirrel monkey).